The sequence spans 354 residues: Clavesin-1 (354 aa).

The CRAL-TRIO domain occupies 118–279; sequence IKRALIDGFP…EFGGTLPPYD (162 aa). The disordered stretch occupies residues 317–354; it reads RECSPKPMKRSQSVVEAGTLKHEEKGENENTQPLLALD. Residues 335-344 are compositionally biased toward basic and acidic residues; sequence TLKHEEKGEN. Residues 345–354 are compositionally biased toward polar residues; that stretch reads ENTQPLLALD.

As to quaternary structure, forms a complex with clathrin heavy chain and gamma-adaptin. As to expression, expressed in brain with no expression detected in non-neuronal tissues (at protein level).

Its subcellular location is the golgi apparatus. The protein resides in the trans-Golgi network membrane. The protein localises to the early endosome membrane. It is found in the cytoplasmic vesicle. It localises to the clathrin-coated vesicle. Functionally, required for normal morphology of late endosomes and/or lysosomes in neurons. Binds phosphatidylinositol 3,5-bisphosphate (PtdIns(3,5)P2). This chain is Clavesin-1, found in Rattus norvegicus (Rat).